We begin with the raw amino-acid sequence, 185 residues long: Imidazoleglycerol-phosphate dehydratase (185 aa).

The protein belongs to the imidazoleglycerol-phosphate dehydratase family.

It is found in the cytoplasm. It catalyses the reaction D-erythro-1-(imidazol-4-yl)glycerol 3-phosphate = 3-(imidazol-4-yl)-2-oxopropyl phosphate + H2O. Its pathway is amino-acid biosynthesis; L-histidine biosynthesis; L-histidine from 5-phospho-alpha-D-ribose 1-diphosphate: step 6/9. The polypeptide is Imidazoleglycerol-phosphate dehydratase (Pyrobaculum arsenaticum (strain DSM 13514 / JCM 11321 / PZ6)).